Reading from the N-terminus, the 267-residue chain is NADP-dependent mannitol dehydrogenase (267 aa).

The NADP(+) site is built by Asn108 and Lys141. The Proton donor role is filled by Ser160. Tyr175, Lys179, Ile207, and Thr209 together coordinate NADP(+). The active-site Proton acceptor is Tyr175. Residue Lys179 is the Lowers pKa of active site Tyr of the active site.

Belongs to the short-chain dehydrogenases/reductases (SDR) family. Exists as monomer, dimer and tetramer.

It carries out the reaction D-mannitol + NADP(+) = D-fructose + NADPH + H(+). Functionally, interconverts D-mannitol and D-fructose. Not active with fructose 6-phosphate or NADH. This is NADP-dependent mannitol dehydrogenase from Davidiella tassiana (Mycosphaerella tassiana).